A 335-amino-acid chain; its full sequence is Arylacetonitrilase (335 aa).

The CN hydrolase domain occupies 6 to 291 (LKVAITQAQP…EGIVYADLDM (286 aa)). The active-site Proton acceptor is the glutamate 46. Lysine 127 is an active-site residue. The Nucleophile role is filled by cysteine 168.

The protein belongs to the carbon-nitrogen hydrolase superfamily. Nitrilase family.

It carries out the reaction a nitrile + 2 H2O = a carboxylate + NH4(+). The catalysed reaction is 4-chlorophenylacetonitrile + 2 H2O = 4-chlorophenylacetate + NH4(+). In terms of biological role, nitrilase that hydrolyzes preferentially phenylacetonitrile, (R,S)-mandelonitrile, and 3-indolylacetonitrile. This is Arylacetonitrilase from Arthroderma benhamiae (strain ATCC MYA-4681 / CBS 112371) (Trichophyton mentagrophytes).